Here is a 447-residue protein sequence, read N- to C-terminus: Growth/differentiation factor 7 (447 aa).

An N-terminal signal peptide occupies residues 1-19 (MDLSAAAALCLWLLSACRP). The propeptide occupies 20–318 (RDGLEAAAVL…AVTAGRRRRR (299 aa)). N80 carries an N-linked (GlcNAc...) asparagine glycan. The segment at 292 to 346 (LAAQPPPDPGTGTGSPRAVTAGRRRRRTALAGTRTAQGSGGGAGRGHGRRGRSRC) is disordered. Basic residues predominate over residues 337 to 346 (GHGRRGRSRC). Intrachain disulfides connect C346–C412, C375–C444, and C379–C446.

It belongs to the TGF-beta family. In terms of assembly, homodimer; disulfide-linked. As to expression, highly expressed in the primary aera of brain neocortex.

The protein localises to the secreted. Its function is as follows. May play an active role in the motor area of the primate neocortex. In Chlorocebus aethiops (Green monkey), this protein is Growth/differentiation factor 7 (GDF7).